The chain runs to 217 residues: MNKLITVAIDGPAGAGKSTIAKIIGEKFNLMYINTGSMYRAVTLKALENNISAEEVDKLLVMIDGMDMHFENDELILNGENINSLITMPNISKNVSAYASIREVRERLVNLMRKMALKYSVIMDGRDIGTVVLKDANFKFFLTASPEERADRRYKELMGKGVEVNYDEILQDIIKRDYLDSNREVDPLRKAEDAIEIDTTGIGIMGVVEKISSYMEK.

11–19 is an ATP binding site; sequence GPAGAGKST.

The protein belongs to the cytidylate kinase family. Type 1 subfamily.

It is found in the cytoplasm. The catalysed reaction is CMP + ATP = CDP + ADP. The enzyme catalyses dCMP + ATP = dCDP + ADP. This is Cytidylate kinase from Clostridium perfringens (strain ATCC 13124 / DSM 756 / JCM 1290 / NCIMB 6125 / NCTC 8237 / Type A).